Here is a 496-residue protein sequence, read N- to C-terminus: Glycerol kinase (496 aa).

Thr-11 lines the ADP pocket. Positions 11, 12, and 13 each coordinate ATP. Thr-11 is a binding site for sn-glycerol 3-phosphate. Residue Arg-15 participates in ADP binding. Residues Arg-81, Glu-82, Tyr-133, and Asp-242 each coordinate sn-glycerol 3-phosphate. The glycerol site is built by Arg-81, Glu-82, Tyr-133, Asp-242, and Gln-243. ADP is bound by residues Thr-264 and Gly-307. ATP-binding residues include Thr-264, Gly-307, Gln-311, and Gly-412. ADP is bound by residues Gly-412 and Asn-416.

Belongs to the FGGY kinase family.

It catalyses the reaction glycerol + ATP = sn-glycerol 3-phosphate + ADP + H(+). It functions in the pathway polyol metabolism; glycerol degradation via glycerol kinase pathway; sn-glycerol 3-phosphate from glycerol: step 1/1. Its activity is regulated as follows. Inhibited by fructose 1,6-bisphosphate (FBP). Functionally, key enzyme in the regulation of glycerol uptake and metabolism. Catalyzes the phosphorylation of glycerol to yield sn-glycerol 3-phosphate. The chain is Glycerol kinase from Albidiferax ferrireducens (strain ATCC BAA-621 / DSM 15236 / T118) (Rhodoferax ferrireducens).